A 292-amino-acid chain; its full sequence is Expansin-B11 (292 aa).

The N-terminal stretch at 1 to 27 (MAKSCTLVLLLVALVGLSLLVSPIACS) is a signal peptide. N51 carries N-linked (GlcNAc...) asparagine glycosylation. The 111-residue stretch at 82–192 (GGACGYQTAV…RRVPCKYSGV (111 aa)) folds into the Expansin-like EG45 domain. Cystine bridges form between C85–C114, C117–C187, and C122–C128. The Expansin-like CBD domain maps to 205–287 (FYFEVLIEFE…SWKPGVTYRS (83 aa)).

This sequence belongs to the expansin family. Expansin B subfamily. As to expression, expressed in internodes.

The protein resides in the secreted. It localises to the cell wall. It is found in the membrane. Functionally, may cause loosening and extension of plant cell walls by disrupting non-covalent bonding between cellulose microfibrils and matrix glucans. No enzymatic activity has been found. May be required for rapid internodal elongation in deepwater rice during submergence. In Oryza sativa subsp. japonica (Rice), this protein is Expansin-B11 (EXPB11).